A 457-amino-acid polypeptide reads, in one-letter code: Ribosomal protein uS12 methylthiotransferase RimO (457 aa).

One can recognise an MTTase N-terminal domain in the interval 6-116; the sequence is PKVGFVSLGC…VMEAVHAALP (111 aa). 6 residues coordinate [4Fe-4S] cluster: Cys-15, Cys-51, Cys-80, Cys-147, Cys-151, and Cys-154. The Radical SAM core domain occupies 133-371; the sequence is LTPRHYAYLK…AKQAQISALR (239 aa). Positions 373–441 constitute a TRAM domain; sequence ESKIGSVQQC…EHDLFGDALP (69 aa).

The protein belongs to the methylthiotransferase family. RimO subfamily. Requires [4Fe-4S] cluster as cofactor.

The protein resides in the cytoplasm. It carries out the reaction L-aspartate(89)-[ribosomal protein uS12]-hydrogen + (sulfur carrier)-SH + AH2 + 2 S-adenosyl-L-methionine = 3-methylsulfanyl-L-aspartate(89)-[ribosomal protein uS12]-hydrogen + (sulfur carrier)-H + 5'-deoxyadenosine + L-methionine + A + S-adenosyl-L-homocysteine + 2 H(+). In terms of biological role, catalyzes the methylthiolation of an aspartic acid residue of ribosomal protein uS12. In Xanthomonas axonopodis pv. citri (strain 306), this protein is Ribosomal protein uS12 methylthiotransferase RimO.